We begin with the raw amino-acid sequence, 485 residues long: Glutamyl-tRNA(Gln) amidotransferase subunit A (485 aa).

Active-site charge relay system residues include lysine 79 and serine 154. Serine 178 serves as the catalytic Acyl-ester intermediate.

Belongs to the amidase family. GatA subfamily. In terms of assembly, heterotrimer of A, B and C subunits.

The enzyme catalyses L-glutamyl-tRNA(Gln) + L-glutamine + ATP + H2O = L-glutaminyl-tRNA(Gln) + L-glutamate + ADP + phosphate + H(+). In terms of biological role, allows the formation of correctly charged Gln-tRNA(Gln) through the transamidation of misacylated Glu-tRNA(Gln) in organisms which lack glutaminyl-tRNA synthetase. The reaction takes place in the presence of glutamine and ATP through an activated gamma-phospho-Glu-tRNA(Gln). The polypeptide is Glutamyl-tRNA(Gln) amidotransferase subunit A (Staphylococcus aureus (strain MRSA252)).